The sequence spans 230 residues: uncharacterized protein (230 aa).

Residue 10–34 (VVTGASSGIGEAIAKKLSQQGASIV) coordinates NADP(+). Ser-139 is a substrate binding site. Tyr-152 serves as the catalytic Proton acceptor.

The protein belongs to the short-chain dehydrogenases/reductases (SDR) family.

This is an uncharacterized protein from Staphylococcus epidermidis (strain ATCC 12228 / FDA PCI 1200).